The following is a 287-amino-acid chain: Lycopene elongase/hydratase (287 aa).

7 consecutive transmembrane segments (helical) span residues 15 to 35 (ISWI…AGEI), 37 to 57 (WLFW…MYGI), 87 to 107 (TLLW…FIFG), 137 to 157 (FIDA…GATI), 166 to 186 (MWIA…LGAV), 218 to 238 (LLAA…GIAI), and 265 to 285 (VFLW…IAIH).

The protein belongs to the UbiA prenyltransferase family.

The protein localises to the cell membrane. It carries out the reaction all-trans-lycopene + dimethylallyl diphosphate + A + H2O = nonaflavuxanthin + AH2 + diphosphate. The catalysed reaction is nonaflavuxanthin + dimethylallyl diphosphate + A + H2O = flavuxanthin + AH2 + diphosphate. It functions in the pathway carotenoid biosynthesis. Its function is as follows. Catalyzes the elongation of the C(40) carotenoid all-trans-lycopene to the acyclic C(50) carotenoid flavuxanthin during decaprenoxanthin biosynthesis. Acts as a bifunctional enzyme that catalyzes the elongation of lycopene by attaching a C(5) isoprene unit at C-2, as well as the hydroxylation of the new isoprene unit. The enzyme acts at both ends of the substrate, forming the C(50) carotenoid flavuxanthin via the C(45) intermediate nonaflavuxanthin. The polypeptide is Lycopene elongase/hydratase (Corynebacterium glutamicum (strain ATCC 13032 / DSM 20300 / JCM 1318 / BCRC 11384 / CCUG 27702 / LMG 3730 / NBRC 12168 / NCIMB 10025 / NRRL B-2784 / 534)).